A 157-amino-acid chain; its full sequence is MPRRRKIAKRIVPGDPIHNSIHVQMLINKVMMHGKKSVAENIVYRALDVAAQRLNREPVDLFEQVLRNSSPTIEVRPKRVGGSTYQVPVEVKSDRRIALAIRWLLTAARGRSGKPMHERLALELVDAFNNTGATVKRREEVHRMAEANRAFSHYARF.

Belongs to the universal ribosomal protein uS7 family. In terms of assembly, part of the 30S ribosomal subunit. Contacts proteins S9 and S11.

Functionally, one of the primary rRNA binding proteins, it binds directly to 16S rRNA where it nucleates assembly of the head domain of the 30S subunit. Is located at the subunit interface close to the decoding center, probably blocks exit of the E-site tRNA. In Herpetosiphon aurantiacus (strain ATCC 23779 / DSM 785 / 114-95), this protein is Small ribosomal subunit protein uS7.